Consider the following 274-residue polypeptide: NH(3)-dependent NAD(+) synthetase (274 aa).

46 to 53 contributes to the ATP binding site; the sequence is GISGGQDS. Asp52 serves as a coordination point for Mg(2+). Arg140 lines the deamido-NAD(+) pocket. Thr160 contributes to the ATP binding site. Glu165 contacts Mg(2+). 2 residues coordinate deamido-NAD(+): Lys173 and Asp180. Positions 189 and 211 each coordinate ATP. Residue 260-261 coordinates deamido-NAD(+); that stretch reads HK.

Belongs to the NAD synthetase family. In terms of assembly, homodimer.

It carries out the reaction deamido-NAD(+) + NH4(+) + ATP = AMP + diphosphate + NAD(+) + H(+). The protein operates within cofactor biosynthesis; NAD(+) biosynthesis; NAD(+) from deamido-NAD(+) (ammonia route): step 1/1. Its function is as follows. Catalyzes the ATP-dependent amidation of deamido-NAD to form NAD. Uses ammonia as a nitrogen source. The chain is NH(3)-dependent NAD(+) synthetase from Streptococcus pneumoniae serotype 19F (strain G54).